A 206-amino-acid polypeptide reads, in one-letter code: Octanoyltransferase (206 aa).

In terms of domain architecture, BPL/LPL catalytic spans 30-206 (PETNDEIWLV…EFVTLLNNSI (177 aa)). Substrate is bound by residues 69–76 (RGGQVTYH), 137–139 (SLG), and 150–152 (GIA). The active-site Acyl-thioester intermediate is the Cys168.

This sequence belongs to the LipB family.

Its subcellular location is the cytoplasm. It catalyses the reaction octanoyl-[ACP] + L-lysyl-[protein] = N(6)-octanoyl-L-lysyl-[protein] + holo-[ACP] + H(+). Its pathway is protein modification; protein lipoylation via endogenous pathway; protein N(6)-(lipoyl)lysine from octanoyl-[acyl-carrier-protein]: step 1/2. In terms of biological role, catalyzes the transfer of endogenously produced octanoic acid from octanoyl-acyl-carrier-protein onto the lipoyl domains of lipoate-dependent enzymes. Lipoyl-ACP can also act as a substrate although octanoyl-ACP is likely to be the physiological substrate. The sequence is that of Octanoyltransferase from Francisella tularensis subsp. mediasiatica (strain FSC147).